Here is a 107-residue protein sequence, read N- to C-terminus: uncharacterized protein (107 aa).

The disordered stretch occupies residues 86–107 (QVSNHEEDADVLETQDDNAEQV). Over residues 92-107 (EDADVLETQDDNAEQV) the composition is skewed to acidic residues.

This is an uncharacterized protein from Rickettsia prowazekii (strain Madrid E).